A 193-amino-acid chain; its full sequence is ATP-dependent Clp protease proteolytic subunit (193 aa).

S98 serves as the catalytic Nucleophile. H123 is a catalytic residue.

The protein belongs to the peptidase S14 family. As to quaternary structure, fourteen ClpP subunits assemble into 2 heptameric rings which stack back to back to give a disk-like structure with a central cavity, resembling the structure of eukaryotic proteasomes.

It localises to the cytoplasm. It carries out the reaction Hydrolysis of proteins to small peptides in the presence of ATP and magnesium. alpha-casein is the usual test substrate. In the absence of ATP, only oligopeptides shorter than five residues are hydrolyzed (such as succinyl-Leu-Tyr-|-NHMec, and Leu-Tyr-Leu-|-Tyr-Trp, in which cleavage of the -Tyr-|-Leu- and -Tyr-|-Trp bonds also occurs).. Its function is as follows. Cleaves peptides in various proteins in a process that requires ATP hydrolysis. Has a chymotrypsin-like activity. Plays a major role in the degradation of misfolded proteins. ClpXP is involved in the complete degradation of the Site-2 clipped anti-sigma-W factor RsiW. This results in the release of SigW and the transcription activation of the genes under the control of the sigma-W factor. The polypeptide is ATP-dependent Clp protease proteolytic subunit (Oceanobacillus iheyensis (strain DSM 14371 / CIP 107618 / JCM 11309 / KCTC 3954 / HTE831)).